The sequence spans 229 residues: MTSKSLSAWVIHKQWSGDTSARLKLFTRELGLINCLCKGGRTPKKQSLLQAFIPLWVSIEERYDQYYTRNIESTSSRLDLEGHSLFSGLYINELLYYTLSPDFPDPDLFDAYLFTLNGIALAREREAIEALLRRFEWALLKACGYTFSFLHEARTGELIVPDSYYQFVAGEGFILGGDKEIPGEHLLAIAADNLSEPAYLKSAKFIMRQAINHLLGGREIKARSLYGPA.

Belongs to the RecO family.

Functionally, involved in DNA repair and RecF pathway recombination. The chain is DNA repair protein RecO from Legionella pneumophila (strain Lens).